Reading from the N-terminus, the 102-residue chain is Integration host factor subunit beta (102 aa).

This sequence belongs to the bacterial histone-like protein family. As to quaternary structure, heterodimer of an alpha and a beta chain.

Functionally, this protein is one of the two subunits of integration host factor, a specific DNA-binding protein that functions in genetic recombination as well as in transcriptional and translational control. In Rhodopseudomonas palustris (strain BisA53), this protein is Integration host factor subunit beta.